Consider the following 469-residue polypeptide: MAATTENLPQLKSAVDGLTEMSESEKSGFISLVSRYLSGEAQHIEWSKIQTPTDEIVVPYEKMTPVSQDVAETKNLLDKLVVLKLNGGLGTTMGCTGPKSVIEVRDGLTFLDLIVIQIENLNNKYGCKVPLVLMNSFNTHDDTHKIVEKYTNSNVDIHTFNQSKYPRVVADEFVPWPSKGKTDKEGWYPPGHGDVFPALMNSGKLDTFLSQGKEYVFVANSDNLGAIVDLTILKHLIQNKNEYCMEVTPKTLADVKGGTLISYEGKVQLLEIAQVPDEHVNEFKSIEKFKIFNTNNLWVNLKAIKKLVEADALKMEIIPNPKEVDGVKVLQLETAAGAAIRFFDNAIGVNVPRSRFLPVKASSDLLLVQSDLYTLVDGFVTRNKARTNPSNPSIELGPEFKKVATFLSRFKSIPSIVELDSLKVSGDVWFGSSIVLKGKVTVAAKSGVKLEIPDRAVVENKNINGPEDL.

Residue Ala-2 is modified to N-acetylalanine. UTP-binding positions include 85–88, Lys-99, Gln-162, and Gly-191; that span reads LNGG. 87–88 is a substrate binding site; it reads GG. Substrate-binding positions include His-192 and 220-222; that span reads NSD. 2 residues coordinate UTP: Asp-222 and Lys-360.

It belongs to the UDPGP type 1 family. As to expression, expressed in cauline leaves, flowers and siliques.

The protein resides in the cytoplasm. The enzyme catalyses alpha-D-glucose 1-phosphate + UTP + H(+) = UDP-alpha-D-glucose + diphosphate. Functionally, converts glucose 1-phosphate to UDP-glucose, which is the major glycosyl donor for polysaccharides. Acts redundantly with UGP1 and is essential for the synthesis of sucrose, starch and cell wall, and callose deposition. The polypeptide is UTP--glucose-1-phosphate uridylyltransferase 2 (Arabidopsis thaliana (Mouse-ear cress)).